A 169-amino-acid chain; its full sequence is TPD1 protein homolog 1B (169 aa).

Residues 1-25 (MADCTTMRLASSVTIILLLLVASQA) form the signal peptide.

Expressed in roots, and at low levels in anthers during meiosis.

May play a role during anther development. The sequence is that of TPD1 protein homolog 1B from Oryza sativa subsp. japonica (Rice).